A 416-amino-acid polypeptide reads, in one-letter code: Serine protease hepsin (416 aa).

The Cytoplasmic segment spans residues 1-18 (MAKEGGRTAPCCSRPKVA). A helical; Signal-anchor for type II membrane protein transmembrane segment spans residues 19 to 39 (ALTVGTLLFLTGIGAASWAIV). Residues 40–416 (TILLRSDQEP…SEATGMVTQP (377 aa)) lie on the Extracellular side of the membrane. Positions 53–150 (VQLSPGDSRL…RGRFLTATCQ (98 aa)) constitute an SRCR domain. Cystine bridges form between Cys76-Cys139, Cys89-Cys149, Cys118-Cys137, Cys152-Cys276, Cys187-Cys203, Cys290-Cys358, Cys321-Cys337, and Cys348-Cys380. Asn111 is a glycosylation site (N-linked (GlcNAc...) asparagine). In terms of domain architecture, Peptidase S1 spans 162–404 (IVGGQDSSLG…FREWIFQAIK (243 aa)). Residues His202 and Asp256 each act as charge relay system in the active site. The Charge relay system role is filled by Ser352.

The protein belongs to the peptidase S1 family. Widely expressed. Present in brain, heart, kidney, liver, stomach, muscle, lung, testis, skin and eye. Not expressed in ovary and thynus. In inner ear tissues, expressed in stria vascularis, modiolus, organ of Corti and spiral ganglion.

It localises to the cell membrane. It is found in the apical cell membrane. The catalysed reaction is Cleavage after basic amino-acid residues, with Arg strongly preferred to Lys.. Serine protease that cleaves extracellular substrates, and contributes to the proteolytic processing of growth factors, such as HGF and MST1/HGFL. Plays a role in cell growth and maintenance of cell morphology. Plays a role in the proteolytic processing of ACE2. Mediates the proteolytic cleavage of urinary UMOD that is required for UMOD polymerization. The chain is Serine protease hepsin (Hpn) from Rattus norvegicus (Rat).